Reading from the N-terminus, the 101-residue chain is NADH-quinone oxidoreductase subunit K (101 aa).

3 consecutive transmembrane segments (helical) span residues 5–25, 30–50, and 62–82; these read PNWYLALSAVLFTIGTFGVLF, IVVLMSVELMLNAVNLTLVTF, and LVFFSIAVAAAEAAVGLAIVI.

This sequence belongs to the complex I subunit 4L family. In terms of assembly, NDH-1 is composed of 14 different subunits. Subunits NuoA, H, J, K, L, M, N constitute the membrane sector of the complex.

The protein resides in the cell inner membrane. The enzyme catalyses a quinone + NADH + 5 H(+)(in) = a quinol + NAD(+) + 4 H(+)(out). In terms of biological role, NDH-1 shuttles electrons from NADH, via FMN and iron-sulfur (Fe-S) centers, to quinones in the respiratory chain. The immediate electron acceptor for the enzyme in this species is believed to be a menaquinone. Couples the redox reaction to proton translocation (for every two electrons transferred, four hydrogen ions are translocated across the cytoplasmic membrane), and thus conserves the redox energy in a proton gradient. The protein is NADH-quinone oxidoreductase subunit K of Salinibacter ruber (strain DSM 13855 / M31).